Consider the following 477-residue polypeptide: Glycogen synthase (477 aa).

Position 15 (K15) interacts with ADP-alpha-D-glucose.

The protein belongs to the glycosyltransferase 1 family. Bacterial/plant glycogen synthase subfamily.

The catalysed reaction is [(1-&gt;4)-alpha-D-glucosyl](n) + ADP-alpha-D-glucose = [(1-&gt;4)-alpha-D-glucosyl](n+1) + ADP + H(+). It participates in glycan biosynthesis; glycogen biosynthesis. Synthesizes alpha-1,4-glucan chains using ADP-glucose. This is Glycogen synthase from Streptococcus pneumoniae (strain Hungary19A-6).